The chain runs to 307 residues: Peroxisomal membrane protein PMP34 (307 aa).

Over methionine 1–serine 9 the chain is Cytoplasmic. Residues methionine 1–lysine 147 are necessary for targeting to peroxisomes and interaction with PEX19. Solcar repeat units follow at residues tyrosine 7 to valine 92, serine 99 to glutamine 192, and leucine 200 to alanine 294. A helical transmembrane segment spans residues leucine 10–leucine 30. The Lumenal segment spans residues aspartate 31–arginine 66. A helical transmembrane segment spans residues glycine 67 to asparagine 87. The Cytoplasmic segment spans residues serine 88 to aspartate 104. The chain crosses the membrane as a helical span at residues leucine 105–valine 125. Residues asparagine 126 to glutamate 160 are Lumenal-facing. The chain crosses the membrane as a helical span at residues glycine 161 to isoleucine 181. Topologically, residues glutamine 182–serine 202 are cytoplasmic. The Peroxisome localization signal motif lies at lysine 190 to lysine 199. A helical membrane pass occupies residues leucine 203 to methionine 223. Over glutamine 224–threonine 280 the chain is Lumenal. The tract at residues leucine 244–histidine 307 is necessary for targeting to peroxisomes and interaction with PEX19. A helical membrane pass occupies residues alanine 281–leucine 301. Residues lysine 302–histidine 307 are Cytoplasmic-facing.

Belongs to the mitochondrial carrier (TC 2.A.29) family. Interacts (via N- and C-terminus peroxisomal targeting regions) with PEX19; the interaction occurs with the newly synthesized SLC25A17 in the cytosol. As to expression, expressed in liver, kidney, heart, spleen, muscle and lung.

The protein localises to the cytoplasm. It is found in the peroxisome membrane. It catalyses the reaction AMP(out) + CoA(in) = AMP(in) + CoA(out). The catalysed reaction is 3'-dephospho-CoA(in) + AMP(out) = 3'-dephospho-CoA(out) + AMP(in). It carries out the reaction acetyl-CoA(in) + AMP(out) = acetyl-CoA(out) + AMP(in). The enzyme catalyses AMP(in) + NAD(+)(out) = AMP(out) + NAD(+)(in). It catalyses the reaction FAD(in) + AMP(out) = FAD(out) + AMP(in). The catalysed reaction is FMN(in) + AMP(out) = FMN(out) + AMP(in). It carries out the reaction AMP(in) + ADP(out) = AMP(out) + ADP(in). The enzyme catalyses adenosine 3',5'-bisphosphate(in) + AMP(out) = adenosine 3',5'-bisphosphate(out) + AMP(in). It catalyses the reaction FAD(in) + CoA(out) = FAD(out) + CoA(in). The catalysed reaction is FAD(in) + adenosine 3',5'-bisphosphate(out) = FAD(out) + adenosine 3',5'-bisphosphate(in). It carries out the reaction FMN(in) + CoA(out) = FMN(out) + CoA(in). The enzyme catalyses FMN(in) + adenosine 3',5'-bisphosphate(out) = FMN(out) + adenosine 3',5'-bisphosphate(in). It catalyses the reaction FAD(out) + NAD(+)(in) = FAD(in) + NAD(+)(out). The catalysed reaction is FMN(out) + NAD(+)(in) = FMN(in) + NAD(+)(out). It carries out the reaction NAD(+)(in) + CoA(out) = NAD(+)(out) + CoA(in). The enzyme catalyses adenosine 3',5'-bisphosphate(out) + NAD(+)(in) = adenosine 3',5'-bisphosphate(in) + NAD(+)(out). It catalyses the reaction FMN(out) + ADP(in) = FMN(in) + ADP(out). The catalysed reaction is FAD(out) + ADP(in) = FAD(in) + ADP(out). It carries out the reaction ADP(out) + CoA(in) = ADP(in) + CoA(out). The enzyme catalyses adenosine 3',5'-bisphosphate(in) + ADP(out) = adenosine 3',5'-bisphosphate(out) + ADP(in). Functionally, peroxisomal transporter for multiple cofactors like coenzyme A (CoA), flavin adenine dinucleotide (FAD), flavin mononucleotide (FMN) and nucleotide adenosine monophosphate (AMP), and to a lesser extent for nicotinamide adenine dinucleotide (NAD(+)), adenosine diphosphate (ADP) and adenosine 3',5'-diphosphate (PAP). May catalyze the transport of free CoA, FAD and NAD(+) from the cytosol into the peroxisomal matrix by a counter-exchange mechanism. This Mus musculus (Mouse) protein is Peroxisomal membrane protein PMP34 (Slc25a17).